The primary structure comprises 171 residues: Co-chaperone protein HscB homolog (171 aa).

One can recognise a J domain in the interval 2–74 (NHFELFGLPN…VTRAEYILSE (73 aa)).

It belongs to the HscB family. In terms of assembly, interacts with HscA and stimulates its ATPase activity.

Its function is as follows. Co-chaperone involved in the maturation of iron-sulfur cluster-containing proteins. Seems to help targeting proteins to be folded toward HscA. In Aliivibrio salmonicida (strain LFI1238) (Vibrio salmonicida (strain LFI1238)), this protein is Co-chaperone protein HscB homolog.